Here is an 87-residue protein sequence, read N- to C-terminus: Phosphoribosyl-ATP pyrophosphatase (87 aa).

The protein belongs to the PRA-PH family.

It localises to the cytoplasm. It carries out the reaction 1-(5-phospho-beta-D-ribosyl)-ATP + H2O = 1-(5-phospho-beta-D-ribosyl)-5'-AMP + diphosphate + H(+). The protein operates within amino-acid biosynthesis; L-histidine biosynthesis; L-histidine from 5-phospho-alpha-D-ribose 1-diphosphate: step 2/9. This Bifidobacterium animalis subsp. lactis (strain AD011) protein is Phosphoribosyl-ATP pyrophosphatase.